The following is a 405-amino-acid chain: Maintenance of mitochondrial morphology protein 1 (405 aa).

The Lumenal segment spans residues 1–86 (MQVLNFYVNP…TGSTKSFTQG (86 aa)). Residues 87-107 (LIIGQLSVIILLGIFIKFFVF) form a helical membrane-spanning segment. Residues 108 to 405 (ADSSTTSSTS…QPVSTTESDH (298 aa)) lie on the Cytoplasmic side of the membrane. Residues 166-385 (APESLDWFNV…EPRFQVVKLP (220 aa)) form the SMP-LTD domain. The segment at 303–324 (SEPRVAMDSPQSTRDDNSEEPN) is disordered.

Belongs to the MMM1 family. As to quaternary structure, homodimer. Component of the ER-mitochondria encounter structure (ERMES) or MDM complex, composed of MMM1, MDM10, MDM12 and MDM34. An MMM1 homodimer associates with one molecule of MDM12 on each side in a pairwise head-to-tail manner, and the SMP-LTD domains of MMM1 and MDM12 generate a continuous hydrophobic tunnel for phospholipid trafficking.

The protein localises to the endoplasmic reticulum membrane. In terms of biological role, component of the ERMES/MDM complex, which serves as a molecular tether to connect the endoplasmic reticulum (ER) and mitochondria. Components of this complex are involved in the control of mitochondrial shape and protein biogenesis, and function in nonvesicular lipid trafficking between the ER and mitochondria. The MDM12-MMM1 subcomplex functions in the major beta-barrel assembly pathway that is responsible for biogenesis of all outer membrane beta-barrel proteins, and acts in a late step after the SAM complex. The MDM10-MDM12-MMM1 subcomplex further acts in the TOM40-specific pathway after the action of the MDM12-MMM1 complex. Essential for establishing and maintaining the structure of mitochondria and maintenance of mtDNA nucleoids. The polypeptide is Maintenance of mitochondrial morphology protein 1 (Meyerozyma guilliermondii (strain ATCC 6260 / CBS 566 / DSM 6381 / JCM 1539 / NBRC 10279 / NRRL Y-324) (Yeast)).